A 529-amino-acid polypeptide reads, in one-letter code: Scarecrow-like protein 13 (529 aa).

A compositionally biased stretch (polar residues) spans 51–81 (ASGSLPSYDSPSVSITSGRSPFSPQGSQSCI). Residues 51-84 (ASGSLPSYDSPSVSITSGRSPFSPQGSQSCISDL) form a disordered region. In terms of domain architecture, GRAS spans 146 to 525 (LLALTPQLDL…RPMATCSVWK (380 aa)). Residues 153–213 (LDLKEVLVEA…RARLEGSGSN (61 aa)) form a leucine repeat I (LRI) region. Positions 232-297 (MSVLYEICPY…GGPPLLRVTG (66 aa)) are VHIID. A VHIID motif is present at residues 263–267 (VHIID). The tract at residues 313–345 (LVGERLATLAQSCGVPFEFHDAIMSGCKVQREH) is leucine repeat II (LRII). The interval 354–448 (VVVNFPYVLH…QHCVARDIVN (95 aa)) is PFYRE. Residues 451–525 (ACEESERVER…RPMATCSVWK (75 aa)) are SAW.

It belongs to the GRAS family. Expressed in roots, hypocotyls, cotyledons, shoot apex, leaves, flowers and siliques.

It is found in the cytoplasm. It localises to the nucleus. Probable transcription factor that acts as a positive regulator of continuous red light signals downstream of phytochrome B (phyB). Required for the regulation of hypocotyl elongation during de-etiolation. May be required to modulate phytochrome A (phyA) signal transduction in a phyB-independent way. The sequence is that of Scarecrow-like protein 13 (SCL13) from Arabidopsis thaliana (Mouse-ear cress).